Here is a 1458-residue protein sequence, read N- to C-terminus: Anaphase-promoting complex subunit 1 (1458 aa).

Residues 186 to 210 form a disordered region; it reads QSIKSSRNRRRESSFSREKNPDLTR. The segment covering 196–210 has biased composition (basic and acidic residues); sequence RESSFSREKNPDLTR. 4 PC repeats span residues 873 to 895, 959 to 982, 1006 to 1024, and 1099 to 1124; these read GLLLGLASSYLGSMDAKVTKLLS, AAGFSLGLINLGRGSNLPGMSDLK, GAIMALTMIYMKTNDLEVA, and GICFSLGLRFAGTGNPKAKEILINFL.

Belongs to the APC1 family. The APC/C is composed of at least 13 subunits: apc1, apc2, nuc2, apc4, apc5, cut9, apc8, apc10, apc11, hcn1, apc13, apc14 and apc15.

In terms of biological role, component of the anaphase-promoting complex/cyclosome (APC/C), a cell cycle-regulated E3 ubiquitin-protein ligase complex that controls progression through mitosis and the G1 phase of the cell cycle. The APC/C is thought to confer substrate specificity and, in the presence of ubiquitin-conjugating E2 enzymes, it catalyzes the formation of protein-ubiquitin conjugates that are subsequently degraded by the 26S proteasome. Mutations to this protein prevent the exit from mitosis. The chain is Anaphase-promoting complex subunit 1 (cut4) from Schizosaccharomyces pombe (strain 972 / ATCC 24843) (Fission yeast).